Here is a 338-residue protein sequence, read N- to C-terminus: Taste receptor type 2 member 39 (338 aa).

Over 1 to 30 (MLGRCFPPDTKEKQQLRMTKLCDPAESELS) the chain is Extracellular. Residues 31–51 (PFLITLILAVLLAEYLIGIIA) form a helical membrane-spanning segment. Residues 52–74 (NGFIMAIHAAEWVQNKAVSTSGR) lie on the Cytoplasmic side of the membrane. Residues 75 to 95 (ILVFLSVSRIALQSLMMLEIT) form a helical membrane-spanning segment. Topologically, residues 96-116 (ISSTSLSFYSEDAVYYAFKIS) are extracellular. The helical transmembrane segment at 117-137 (FIFLNFCSLWFAAWLSFFYFV) threads the bilayer. The Cytoplasmic portion of the chain corresponds to 138–156 (KIANFSYPLFLKLRWRITG). The helical transmembrane segment at 157 to 177 (LIPWLLWLSVFISFSHSMFCI) threads the bilayer. The Extracellular portion of the chain corresponds to 178-205 (NICTVYCNNSFPIHSSNSTKKTYLSEIN). Asn185 and Asn194 each carry an N-linked (GlcNAc...) asparagine glycan. The helical transmembrane segment at 206-226 (VVGLAFFFNLGIVTPLIMFIL) threads the bilayer. Over 227-262 (TATLLILSLKRHTLHMGSNATGSNDPSMEAHMGAIK) the chain is Cytoplasmic. A helical transmembrane segment spans residues 263–283 (AISYFLILYIFNAVALFIYLS). At 284–291 (NMFDINSL) the chain is on the extracellular side. Residues 292–312 (WNNLCQIIMAAYPASHSILLI) form a helical membrane-spanning segment. Residues 313–338 (QDNPGLRRAWKRLQLRLHLYPKEWTL) lie on the Cytoplasmic side of the membrane.

Belongs to the G-protein coupled receptor T2R family. In terms of tissue distribution, expressed in subsets of taste receptor cells of the tongue and exclusively in gustducin-positive cells.

It is found in the membrane. Receptor that may play a role in the perception of bitterness and is gustducin-linked. May play a role in sensing the chemical composition of the gastrointestinal content. The activity of this receptor may stimulate alpha gustducin, mediate PLC-beta-2 activation and lead to the gating of TRPM5. The sequence is that of Taste receptor type 2 member 39 (TAS2R39) from Homo sapiens (Human).